The primary structure comprises 309 residues: GTPase Era (309 aa).

Positions 16–186 (HAGFVAIVGK…REQILDALPE (171 aa)) constitute an Era-type G domain. The interval 24–31 (GKPNVGKS) is G1. Residue 24–31 (GKPNVGKS) participates in GTP binding. The interval 50-54 (QTTRR) is G2. The tract at residues 71 to 74 (DTPG) is G3. GTP-binding positions include 71–75 (DTPGL) and 133–136 (NKVD). The interval 133–136 (NKVD) is G4. Positions 164 to 166 (LSA) are G5. The region spanning 217–294 (LREELPYAVA…FLGLEVIVIP (78 aa)) is the KH type-2 domain.

Belongs to the TRAFAC class TrmE-Era-EngA-EngB-Septin-like GTPase superfamily. Era GTPase family. As to quaternary structure, monomer.

The protein localises to the cytoplasm. It localises to the cell membrane. Its function is as follows. An essential GTPase that binds both GDP and GTP, with rapid nucleotide exchange. Plays a role in 16S rRNA processing and 30S ribosomal subunit biogenesis and possibly also in cell cycle regulation and energy metabolism. This chain is GTPase Era, found in Deinococcus geothermalis (strain DSM 11300 / CIP 105573 / AG-3a).